A 227-amino-acid polypeptide reads, in one-letter code: Cytochrome c oxidase subunit 2 (227 aa).

At 1–14 (MAYPFQLGFQDATS) the chain is on the mitochondrial intermembrane side. Residues 15–45 (PIMEELLHFHDHALMIVFLISSLVLYLISVM) traverse the membrane as a helical segment. Residues 46–59 (LTTSLTHTSTMDAQ) are Mitochondrial matrix-facing. The helical transmembrane segment at 60 to 87 (EVETIWTILPAMILIMIALPSLRILYMM) threads the bilayer. Residues 88 to 227 (DEINNPYLTV…YFEKWSSSML (140 aa)) lie on the Mitochondrial intermembrane side of the membrane. His-161, Cys-196, Glu-198, Cys-200, His-204, and Met-207 together coordinate Cu cation. Residue Glu-198 participates in Mg(2+) binding. Residue Tyr-218 is modified to Phosphotyrosine.

This sequence belongs to the cytochrome c oxidase subunit 2 family. In terms of assembly, component of the cytochrome c oxidase (complex IV, CIV), a multisubunit enzyme composed of 14 subunits. The complex is composed of a catalytic core of 3 subunits MT-CO1, MT-CO2 and MT-CO3, encoded in the mitochondrial DNA, and 11 supernumerary subunits COX4I, COX5A, COX5B, COX6A, COX6B, COX6C, COX7A, COX7B, COX7C, COX8 and NDUFA4, which are encoded in the nuclear genome. The complex exists as a monomer or a dimer and forms supercomplexes (SCs) in the inner mitochondrial membrane with NADH-ubiquinone oxidoreductase (complex I, CI) and ubiquinol-cytochrome c oxidoreductase (cytochrome b-c1 complex, complex III, CIII), resulting in different assemblies (supercomplex SCI(1)III(2)IV(1) and megacomplex MCI(2)III(2)IV(2)). Found in a complex with TMEM177, COA6, COX18, COX20, SCO1 and SCO2. Interacts with TMEM177 in a COX20-dependent manner. Interacts with COX20. Interacts with COX16. Cu cation is required as a cofactor.

It is found in the mitochondrion inner membrane. It catalyses the reaction 4 Fe(II)-[cytochrome c] + O2 + 8 H(+)(in) = 4 Fe(III)-[cytochrome c] + 2 H2O + 4 H(+)(out). Its function is as follows. Component of the cytochrome c oxidase, the last enzyme in the mitochondrial electron transport chain which drives oxidative phosphorylation. The respiratory chain contains 3 multisubunit complexes succinate dehydrogenase (complex II, CII), ubiquinol-cytochrome c oxidoreductase (cytochrome b-c1 complex, complex III, CIII) and cytochrome c oxidase (complex IV, CIV), that cooperate to transfer electrons derived from NADH and succinate to molecular oxygen, creating an electrochemical gradient over the inner membrane that drives transmembrane transport and the ATP synthase. Cytochrome c oxidase is the component of the respiratory chain that catalyzes the reduction of oxygen to water. Electrons originating from reduced cytochrome c in the intermembrane space (IMS) are transferred via the dinuclear copper A center (CU(A)) of subunit 2 and heme A of subunit 1 to the active site in subunit 1, a binuclear center (BNC) formed by heme A3 and copper B (CU(B)). The BNC reduces molecular oxygen to 2 water molecules using 4 electrons from cytochrome c in the IMS and 4 protons from the mitochondrial matrix. The protein is Cytochrome c oxidase subunit 2 (MT-CO2) of Rousettus leschenaultii (Leschenault's rousette).